The following is a 1019-amino-acid chain: Insulin-degrading enzyme (1019 aa).

His-108 lines the Zn(2+) pocket. Catalysis depends on Glu-111, which acts as the Proton acceptor. Residues His-112 and Glu-189 each coordinate Zn(2+). The residue at position 192 (Lys-192) is an N6-succinyllysine. Residues 336–342 and 359–363 each bind substrate; these read HLIGHEG and LVGGQ. Arg-429 contacts ATP. Position 697 is an N6-succinyllysine (Lys-697). The SlyX motif signature appears at 853-858; that stretch reads EKPPHY. Residue 895–901 coordinates ATP; that stretch reads DKPKKLS.

Belongs to the peptidase M16 family. Homodimer. Can also form homotetramers. As to quaternary structure, (Microbial infection) Interacts (via N-terminus) with varicella-zoster virus (VZV) envelope glycoprotein E (via N-terminus); the membrane-associated isoform may function as an entry receptor for this virus. The cofactor is Zn(2+). The N-terminus is blocked. Detected in brain and in cerebrospinal fluid (at protein level).

It localises to the cytoplasm. Its subcellular location is the cytosol. It is found in the cell membrane. The protein localises to the secreted. It catalyses the reaction Degradation of insulin, glucagon and other polypeptides. No action on proteins.. With respect to regulation, activated by small peptides. Activated by ATP and GTP, and to a lesser extent by CTP, TTP and PPPi. Inhibited by bacitracin. In vitro modification of Cys residues impairs enzyme activity. Its function is as follows. Plays a role in the cellular breakdown of insulin, APP peptides, IAPP peptides, natriuretic peptides, glucagon, bradykinin, kallidin, and other peptides, and thereby plays a role in intercellular peptide signaling. Substrate binding induces important conformation changes, making it possible to bind and degrade larger substrates, such as insulin. Contributes to the regulation of peptide hormone signaling cascades and regulation of blood glucose homeostasis via its role in the degradation of insulin, glucagon and IAPP. Plays a role in the degradation and clearance of APP-derived amyloidogenic peptides that are secreted by neurons and microglia. Degrades the natriuretic peptides ANP, BNP and CNP, inactivating their ability to raise intracellular cGMP. Also degrades an aberrant frameshifted 40-residue form of NPPA (fsNPPA) which is associated with familial atrial fibrillation in heterozygous patients. Involved in antigen processing. Produces both the N terminus and the C terminus of MAGEA3-derived antigenic peptide (EVDPIGHLY) that is presented to cytotoxic T lymphocytes by MHC class I. Functionally, (Microbial infection) The membrane-associated isoform acts as an entry receptor for varicella-zoster virus (VZV). This chain is Insulin-degrading enzyme, found in Homo sapiens (Human).